The sequence spans 187 residues: Small ribosomal subunit protein uS5 (187 aa).

In terms of domain architecture, S5 DRBM spans 21–84; that stretch reads MVDKLVHINR…ESAKRDMIFV (64 aa).

It belongs to the universal ribosomal protein uS5 family. Part of the 30S ribosomal subunit. Contacts proteins S4 and S8.

Functionally, with S4 and S12 plays an important role in translational accuracy. In terms of biological role, located at the back of the 30S subunit body where it stabilizes the conformation of the head with respect to the body. This chain is Small ribosomal subunit protein uS5, found in Mesorhizobium japonicum (strain LMG 29417 / CECT 9101 / MAFF 303099) (Mesorhizobium loti (strain MAFF 303099)).